Reading from the N-terminus, the 894-residue chain is Genome polyprotein 2 (894 aa).

Residues 109 to 229 (TAEFKSGFCY…GCEYMLYPVG (121 aa)) enclose the Peptidase C6 domain. Active-site for helper component proteinase activity residues include Cys117 and His189. The disordered stretch occupies residues 502–539 (WVSLDSGDEDDDHSGGGGGSPQTPGGQPPASPAPGTHQ).

It belongs to the bymoviruses polyprotein 2 family. In terms of processing, the viral RNA2 of bymoviruses is expressed as a single polyprotein which undergoes post-translational proteolytic processing resulting in the production of at least two individual proteins. The HC-pro cleaves its C-terminus autocatalytically (Potential).

The enzyme catalyses Hydrolyzes a Gly-|-Gly bond at its own C-terminus, commonly in the sequence -Tyr-Xaa-Val-Gly-|-Gly, in the processing of the potyviral polyprotein.. The protein is Genome polyprotein 2 (RNA2) of Hordeum vulgare (Barley).